Consider the following 156-residue polypeptide: Succinate dehydrogenase assembly factor 2-B, mitochondrial (156 aa).

The transit peptide at 1–24 (MLRQFIVSTVGRRLQLPMMAQSRL) directs the protein to the mitochondrion.

It belongs to the SDHAF2 family. Interacts with the flavoprotein subunit within the SDH catalytic dimer.

It localises to the mitochondrion matrix. In terms of biological role, plays an essential role in the assembly of succinate dehydrogenase (SDH), an enzyme complex (also referred to as respiratory complex II) that is a component of both the tricarboxylic acid (TCA) cycle and the mitochondrial electron transport chain, and which couples the oxidation of succinate to fumarate with the reduction of ubiquinone (coenzyme Q) to ubiquinol. Required for flavinylation (covalent attachment of FAD) of the flavoprotein subunit of the SDH catalytic dimer. This is Succinate dehydrogenase assembly factor 2-B, mitochondrial from Drosophila melanogaster (Fruit fly).